The sequence spans 487 residues: UDP-N-acetylmuramoyl-L-alanyl-D-glutamate--2,6-diaminopimelate ligase (487 aa).

Position 30 (serine 30) interacts with UDP-N-acetyl-alpha-D-muramoyl-L-alanyl-D-glutamate. Position 109–115 (glycine 109–serine 115) interacts with ATP. UDP-N-acetyl-alpha-D-muramoyl-L-alanyl-D-glutamate is bound by residues threonine 151 to threonine 152, serine 178, and arginine 186. N6-carboxylysine is present on lysine 218. Residues arginine 379, aspartate 403 to arginine 406, glycine 455, and glutamate 459 each bind meso-2,6-diaminopimelate. The short motif at aspartate 403 to arginine 406 is the Meso-diaminopimelate recognition motif element.

The protein belongs to the MurCDEF family. MurE subfamily. It depends on Mg(2+) as a cofactor. Post-translationally, carboxylation is probably crucial for Mg(2+) binding and, consequently, for the gamma-phosphate positioning of ATP.

It localises to the cytoplasm. The enzyme catalyses UDP-N-acetyl-alpha-D-muramoyl-L-alanyl-D-glutamate + meso-2,6-diaminopimelate + ATP = UDP-N-acetyl-alpha-D-muramoyl-L-alanyl-gamma-D-glutamyl-meso-2,6-diaminopimelate + ADP + phosphate + H(+). Its pathway is cell wall biogenesis; peptidoglycan biosynthesis. Functionally, catalyzes the addition of meso-diaminopimelic acid to the nucleotide precursor UDP-N-acetylmuramoyl-L-alanyl-D-glutamate (UMAG) in the biosynthesis of bacterial cell-wall peptidoglycan. This Alkaliphilus oremlandii (strain OhILAs) (Clostridium oremlandii (strain OhILAs)) protein is UDP-N-acetylmuramoyl-L-alanyl-D-glutamate--2,6-diaminopimelate ligase.